The following is a 718-amino-acid chain: MTMFNKIVKEFQWGQHKVRLETGEIARQASGAVIVDVEDTVVLATVVGAKTAKPGQDFFPLTVDYLEKTYAAGKIPGGFFRREGRPSEGETLISRLIDRPLRPLFPEGFYNEVQVVIHVLSLNPEIPADIPALIGASAALAVSGLPFNGPVGAARVAYINNEYVLNPTRPQMKESALDLIVAGTERAVLMVESEAQQLSEEVMLGGVVFGHEQMQIAIDAIHDLVREGGKPEWDWQPAAKNEPLIARVTELAQADLLAAYQLRDKQARSAKLKEVYAATSKKLEEDAAAGGTVAADKATVGNVLFDIEAKIVRTQILNGEPRIDGRDTRTVRPIEIRTGVLPRTHGSALFTRGETQAMVVATLGTKGDEQNIDALEGEYRERFMLHYNMPPFATGETGRVGSPKRREIGHGRLAKRALAACLPSADEFGYSIRVVSEITESNGSSSMASVCGGCLALMDAGVPMKAHVAGIAMGLILEGNKFAVLTDILGDEDHLGDMDFKVAGTEQGVTALQMDIKIQGITKEIMQVALAQAKEGRMHILSKMTSAVSGANTVLSDYAPRMITIKINPEKIRDVIGKGGSVIRALTEETGTTIDISDDGVVTIASTSSEGMAEAKKRIENITLEVEVGQVYEGTVLKLLDFGAIVNILPGKDGLLHISEIANERIKDINDYLKDGQQVKVKVIQTDEKGRVRLSAKALLNEGANGASGAPQGEPTPQ.

Residues Asp-493 and Asp-499 each contribute to the Mg(2+) site. The KH domain maps to 560 to 619 (PRMITIKINPEKIRDVIGKGGSVIRALTEETGTTIDISDDGVVTIASTSSEGMAEAKKRI). Residues 629-697 (GQVYEGTVLK…EKGRVRLSAK (69 aa)) enclose the S1 motif domain.

Belongs to the polyribonucleotide nucleotidyltransferase family. It depends on Mg(2+) as a cofactor.

It is found in the cytoplasm. It catalyses the reaction RNA(n+1) + phosphate = RNA(n) + a ribonucleoside 5'-diphosphate. Functionally, involved in mRNA degradation. Catalyzes the phosphorolysis of single-stranded polyribonucleotides processively in the 3'- to 5'-direction. This is Polyribonucleotide nucleotidyltransferase from Paraburkholderia phytofirmans (strain DSM 17436 / LMG 22146 / PsJN) (Burkholderia phytofirmans).